A 142-amino-acid chain; its full sequence is Hemoglobin subunit alpha (142 aa).

The region spanning 2-142 (VLSAADKGNV…VSTVLTSKYR (141 aa)) is the Globin domain. Ser-4 is modified (phosphoserine). 2 positions are modified to N6-succinyllysine: Lys-8 and Lys-12. Lys-17 is modified (N6-acetyllysine; alternate). Position 17 is an N6-succinyllysine; alternate (Lys-17). Position 25 is a phosphotyrosine (Tyr-25). Ser-36 bears the Phosphoserine mark. Lys-41 carries the N6-succinyllysine modification. Ser-50 is modified (phosphoserine). His-59 lines the O2 pocket. His-88 is a heme b binding site. Position 103 is a phosphoserine (Ser-103). A Phosphothreonine modification is found at Thr-109. Residue Ser-125 is modified to Phosphoserine. 2 positions are modified to phosphothreonine: Thr-135 and Thr-138. A Phosphoserine modification is found at Ser-139.

Belongs to the globin family. In terms of assembly, heterotetramer of two alpha chains and two beta chains. Red blood cells.

In terms of biological role, involved in oxygen transport from the lung to the various peripheral tissues. Functionally, hemopressin acts as an antagonist peptide of the cannabinoid receptor CNR1. Hemopressin-binding efficiently blocks cannabinoid receptor CNR1 and subsequent signaling. In Bos gaurus frontalis (Domestic gayal), this protein is Hemoglobin subunit alpha (HBA).